Consider the following 314-residue polypeptide: 4-diphosphocytidyl-2-C-methyl-D-erythritol kinase (314 aa).

Lys11 is a catalytic residue. ATP is bound at residue 99 to 109; sequence PMAAGLAGGST. The active site involves Asp141.

Belongs to the GHMP kinase family. IspE subfamily.

The enzyme catalyses 4-CDP-2-C-methyl-D-erythritol + ATP = 4-CDP-2-C-methyl-D-erythritol 2-phosphate + ADP + H(+). The protein operates within isoprenoid biosynthesis; isopentenyl diphosphate biosynthesis via DXP pathway; isopentenyl diphosphate from 1-deoxy-D-xylulose 5-phosphate: step 3/6. Catalyzes the phosphorylation of the position 2 hydroxy group of 4-diphosphocytidyl-2C-methyl-D-erythritol. This is 4-diphosphocytidyl-2-C-methyl-D-erythritol kinase from Trichodesmium erythraeum (strain IMS101).